The sequence spans 508 residues: Light-independent protochlorophyllide reductase subunit B (508 aa).

D36 contacts [4Fe-4S] cluster. The active-site Proton donor is D294. 429 to 430 (GM) lines the substrate pocket.

It belongs to the ChlB/BchB/BchZ family. Protochlorophyllide reductase is composed of three subunits; ChlL, ChlN and ChlB. Forms a heterotetramer of two ChlB and two ChlN subunits. Requires [4Fe-4S] cluster as cofactor.

The catalysed reaction is chlorophyllide a + oxidized 2[4Fe-4S]-[ferredoxin] + 2 ADP + 2 phosphate = protochlorophyllide a + reduced 2[4Fe-4S]-[ferredoxin] + 2 ATP + 2 H2O. The protein operates within porphyrin-containing compound metabolism; chlorophyll biosynthesis (light-independent). In terms of biological role, component of the dark-operative protochlorophyllide reductase (DPOR) that uses Mg-ATP and reduced ferredoxin to reduce ring D of protochlorophyllide (Pchlide) to form chlorophyllide a (Chlide). This reaction is light-independent. The NB-protein (ChlN-ChlB) is the catalytic component of the complex. In Picosynechococcus sp. (strain ATCC 27264 / PCC 7002 / PR-6) (Agmenellum quadruplicatum), this protein is Light-independent protochlorophyllide reductase subunit B.